Consider the following 269-residue polypeptide: MVTRKMDKRLWSLQGMTALVTGAASGIGYAIVEELAGFGAKIHICDISKTLLNQSLSEWENKGFQVSGSVCDVTSHPEREKLMQTVSSIFDGKLNILVNNVGVLRGKPTTEYVADDFTFHISTNLEAAYHFCQLSHPLLKASGYGSIVFLSSVAGVVSLIDCGSIYGLTKGALNQLARNLACEWAKDGIRANAVAPNVVKTAQSQSFLEDVSKKEGLLSRTPLGRVGEPNEVSSLVVFLCLPAASYITGQTICVDGGLTVNGFSYQPHA.

19-43 (LVTGAASGIGYAIVEELAGFGAKIH) is a binding site for NADP(+). Serine 152 contributes to the substrate binding site. Tyrosine 166 (proton acceptor) is an active-site residue.

It belongs to the short-chain dehydrogenases/reductases (SDR) family. SDR65C subfamily.

This Arabidopsis thaliana (Mouse-ear cress) protein is Tropinone reductase homolog At2g29320.